The chain runs to 252 residues: Ribose-5-phosphate isomerase (252 aa).

This sequence belongs to the ribose 5-phosphate isomerase family.

Its subcellular location is the cytoplasm. It catalyses the reaction aldehydo-D-ribose 5-phosphate = D-ribulose 5-phosphate. It functions in the pathway carbohydrate degradation; pentose phosphate pathway; D-ribose 5-phosphate from D-ribulose 5-phosphate (non-oxidative stage): step 1/1. This chain is Ribose-5-phosphate isomerase (RKI1), found in Debaryomyces hansenii (strain ATCC 36239 / CBS 767 / BCRC 21394 / JCM 1990 / NBRC 0083 / IGC 2968) (Yeast).